The primary structure comprises 308 residues: Acetaldehyde dehydrogenase 2 (308 aa).

12–15 (SGNI) is a binding site for NAD(+). C127 acts as the Acyl-thioester intermediate in catalysis. NAD(+)-binding positions include 162-170 (SAGPGTRAN) and N281.

It belongs to the acetaldehyde dehydrogenase family.

The catalysed reaction is acetaldehyde + NAD(+) + CoA = acetyl-CoA + NADH + H(+). The protein is Acetaldehyde dehydrogenase 2 of Mycobacterium marinum (strain ATCC BAA-535 / M).